A 241-amino-acid polypeptide reads, in one-letter code: ATP synthase subunit a (241 aa).

5 consecutive transmembrane segments (helical) span residues 30–50 (GQVFLTSWILLGSLLVFISLG), 91–111 (FIGTLFLFVFVSNWGGALIPW), 128–148 (INTTIALALLVSLSYFYAGLS), 193–213 (LVVGVLVFLVPLVLPIPVMFL), and 214–234 (GLFTSAIQALIFATLAAYYIG).

The protein belongs to the ATPase A chain family. As to quaternary structure, F-type ATPases have 2 components, CF(1) - the catalytic core - and CF(0) - the membrane proton channel. CF(1) has five subunits: alpha(3), beta(3), gamma(1), delta(1), epsilon(1). CF(0) has four main subunits: a, b, b' and c.

Its subcellular location is the cellular thylakoid membrane. Key component of the proton channel; it plays a direct role in the translocation of protons across the membrane. This Prochlorococcus marinus (strain MIT 9515) protein is ATP synthase subunit a.